The chain runs to 227 residues: MPEGRRLRRALAIALLALVAVTGLLMMAKEQQMGQEISPFDGHSNLALAQAVARGDTQGIHAQATQDRLRERGDRQVTLLQWAVLSQQPDSVQALLDLGADPAAAGLDGNSALHTAAMLQDAQYLRLLLAEGAQMNVRNAVTGATPLAAAVLAGREEQLRLLLAAGADTTLSDRLGDTPLHLAAKINRRTWRCCCCRPGPMPGRATSRASRSSFTSRKRRRICRMTN.

The N-terminal stretch at 1–35 (MPEGRRLRRALAIALLALVAVTGLLMMAKEQQMGQ) is a signal peptide. ANK repeat units follow at residues 75–104 (RQVTLLQWAVLSQQPDSVQALLDLGADPAA), 108–137 (DGNSALHTAAMLQDAQYLRLLLAEGAQMNV), 142–171 (TGATPLAAAVLAGREEQLRLLLAAGADTTL), and 175–204 (LGDTPLHLAAKINRRTWRCCCCRPGPMPGR).

Cell-protective protein that neutralizes the intracellular lysis capacity of phospholipase A1 through a direct interaction with the enzyme. In Serratia liquefaciens, this protein is Protein PhlB (phlB).